The sequence spans 405 residues: CMP-sialic acid transporter 5 (405 aa).

The Cytoplasmic portion of the chain corresponds to 1–43 (MQRNGVVECSVCRSRLVVPSPRSVSRAYDKHRSKISSKFRALN). The chain crosses the membrane as a helical span at residues 44-64 (VLLVVGDCILVGLQPILVFMS). Topologically, residues 65 to 74 (KVDGKFQFSP) are lumenal. A helical transmembrane segment spans residues 75-95 (ISVNFLTEVTKVVFAIVMLII). Over 96–121 (QSRKQKVGEKPLLARSTFIQAARNNA) the chain is Cytoplasmic. Residues 122–142 (LLAVPALLYAINNYLKFIMQL) traverse the membrane as a helical segment. The Lumenal portion of the chain corresponds to 143–147 (YFNPS). A helical membrane pass occupies residues 148–168 (TVKMLSNLKVLVIAVLLKFIM). At 169–171 (KRR) the chain is on the cytoplasmic side. The helical transmembrane segment at 172–192 (FSVIQWEALALLLIGISINQL) threads the bilayer. Topologically, residues 193–200 (RTVPAGNT) are lumenal. A helical transmembrane segment spans residues 201–221 (AFGLPVTAIAYIYTLIFVTVP). Residues 222–244 (SLASVYNEYALKSQYDTSIYLQN) lie on the Cytoplasmic side of the membrane. Residues 245 to 265 (LFLYGYGAIFNFLGILGTALF) traverse the membrane as a helical segment. The Lumenal segment spans residues 266–281 (QGPESFNILRGHSRAT). A helical membrane pass occupies residues 282 to 302 (MFLICNNAAQGILSSFFFKYA). At 303–322 (DTILKKYSSTVATIFTGLAS) the chain is on the cytoplasmic side. A helical membrane pass occupies residues 323 to 343 (AAFLGHTLTINFLLGISVVFI). Residues 344–405 (SMHQFFSPLA…TDERQPLLPT (62 aa)) are Lumenal-facing. The tract at residues 368-405 (DTQNHRSSESSFVNMTAGAAEDASHRIGTDERQPLLPT) is disordered. Basic and acidic residues predominate over residues 389-405 (DASHRIGTDERQPLLPT).

The protein belongs to the nucleotide-sugar transporter family. CMP-Sialate:CMP antiporter (TC 2.A.7.12) subfamily.

It is found in the golgi apparatus membrane. In terms of biological role, sugar transporter involved in the transport of CMP-sialic acid from the cytoplasm into the Golgi. May transport important nucleotide sugars such as CMP-Kdo (2-keto-3-deoxy-D-manno-octulosonic acid) in physiological conditions. In Oryza sativa subsp. japonica (Rice), this protein is CMP-sialic acid transporter 5.